The sequence spans 360 residues: DNA replication and repair protein RecF (360 aa).

33–40 contacts ATP; it reads GENGSGKT.

Belongs to the RecF family.

The protein resides in the cytoplasm. In terms of biological role, the RecF protein is involved in DNA metabolism; it is required for DNA replication and normal SOS inducibility. RecF binds preferentially to single-stranded, linear DNA. It also seems to bind ATP. The chain is DNA replication and repair protein RecF from Rickettsia massiliae (strain Mtu5).